The chain runs to 158 residues: MAEKNKQDDIKVIATNRKAYHDYFIEETIEAGIELKGTEVKSVRLGHVNLKDSFARVENGEVFLYNMHISPYEKGNIFNVDPMRDRKLLLHKSEINRLAGYVQQKGYTLIPLKIYLKRGKIKVELAVAKGKKLFDKREAIAKRDAELEIRKKMKEYLR.

The protein belongs to the SmpB family.

It is found in the cytoplasm. Required for rescue of stalled ribosomes mediated by trans-translation. Binds to transfer-messenger RNA (tmRNA), required for stable association of tmRNA with ribosomes. tmRNA and SmpB together mimic tRNA shape, replacing the anticodon stem-loop with SmpB. tmRNA is encoded by the ssrA gene; the 2 termini fold to resemble tRNA(Ala) and it encodes a 'tag peptide', a short internal open reading frame. During trans-translation Ala-aminoacylated tmRNA acts like a tRNA, entering the A-site of stalled ribosomes, displacing the stalled mRNA. The ribosome then switches to translate the ORF on the tmRNA; the nascent peptide is terminated with the 'tag peptide' encoded by the tmRNA and targeted for degradation. The ribosome is freed to recommence translation, which seems to be the essential function of trans-translation. The sequence is that of SsrA-binding protein from Caldicellulosiruptor saccharolyticus (strain ATCC 43494 / DSM 8903 / Tp8T 6331).